The primary structure comprises 438 residues: Thymidine phosphorylase (438 aa).

This sequence belongs to the thymidine/pyrimidine-nucleoside phosphorylase family. As to quaternary structure, homodimer.

The catalysed reaction is thymidine + phosphate = 2-deoxy-alpha-D-ribose 1-phosphate + thymine. Its pathway is pyrimidine metabolism; dTMP biosynthesis via salvage pathway; dTMP from thymine: step 1/2. Functionally, the enzymes which catalyze the reversible phosphorolysis of pyrimidine nucleosides are involved in the degradation of these compounds and in their utilization as carbon and energy sources, or in the rescue of pyrimidine bases for nucleotide synthesis. The polypeptide is Thymidine phosphorylase (Burkholderia orbicola (strain AU 1054)).